Reading from the N-terminus, the 421-residue chain is ATP-dependent RNA helicase RhlB (421 aa).

The short motif at 9-37 (QKFSDFALHAKVIEALENKGFHYCTPIQA) is the Q motif element. In terms of domain architecture, Helicase ATP-binding spans 40 to 219 (LPLTLAGRDV…FEQMNNAEYV (180 aa)). An ATP-binding site is contributed by 53–60 (AQTGTGKT). A DEAD box motif is present at residues 165–168 (DEAD). The Helicase C-terminal domain occupies 245–390 (RLLQTLIEEE…QSKYNPDALL (146 aa)). Residues 386–421 (PDALLSELPPPKRLTRARSGNGPRRTGAPRNRRRPG) are disordered. A compositionally biased stretch (low complexity) spans 405–414 (GNGPRRTGAP).

Belongs to the DEAD box helicase family. RhlB subfamily. As to quaternary structure, component of the RNA degradosome, which is a multiprotein complex involved in RNA processing and mRNA degradation.

Its subcellular location is the cytoplasm. It carries out the reaction ATP + H2O = ADP + phosphate + H(+). In terms of biological role, DEAD-box RNA helicase involved in RNA degradation. Has RNA-dependent ATPase activity and unwinds double-stranded RNA. This Enterobacter sp. (strain 638) protein is ATP-dependent RNA helicase RhlB.